The primary structure comprises 142 residues: HTH-type transcriptional regulator LysM (142 aa).

In terms of domain architecture, HTH asnC-type spans 6 to 69 (IDESDLKILE…ELENEIRAIV (64 aa)). A DNA-binding region (H-T-H motif) is located at residues 25 to 44 (YTLIAKELKVSEAAIRKRIE).

In terms of assembly, homotetramer.

The protein resides in the cytoplasm. It participates in amino-acid biosynthesis; L-lysine biosynthesis via AAA pathway [regulation]. Functionally, in the absence or at low concentrations of lysine, activates the biosynthesis of this amino acid via the alpha-aminoadipate (AAA) pathway. This Saccharolobus solfataricus (strain ATCC 35092 / DSM 1617 / JCM 11322 / P2) (Sulfolobus solfataricus) protein is HTH-type transcriptional regulator LysM (lysM).